The following is a 522-amino-acid chain: Leucine-rich repeat transmembrane neuronal protein 1 (522 aa).

An N-terminal signal peptide occupies residues 1-34 (MDFLLLGLCLYWLLRRPSGVVLCLLGACFQMLPA). The 29-residue stretch at 35 to 63 (APSGCPQLCRCEGRLLYCEALNLTEAPHN) folds into the LRRNT domain. At 35–427 (APSGCPQLCR…HAENAVQIHK (393 aa)) the chain is on the extracellular side. N56 and N63 each carry an N-linked (GlcNAc...) asparagine glycan. 10 LRR repeats span residues 64–87 (LSGLLGLSLRYNSLSELRAGQFTG), 89–111 (MQLTWLYLDHNHICSVQGDAFQK), 112–135 (LRRVKELTLSSNQITQLPNTTFRP), 137–159 (PNLRSVDLSYNKLQALAPDLFHG), 161–183 (RKLTTLHMRANAIQFVPVRIFQD), 184–207 (CRSLKFLDIGYNQLKSLARNSFAG), 209–231 (FKLTELHLEHNDLVKVNFAHFPR), 233–255 (ISLHSLCLRRNKVAIVVSSLDWV), 256–278 (WNLEKMDLSGNEIEYMEPHVFET), and 279–302 (VPHLQSLQLDSNRLTYIEPRILNS). An N-linked (GlcNAc...) asparagine glycan is attached at N130. In terms of domain architecture, LRRCT spans 314-365 (NLWDCGRNVCALASWLNNFQGRYDGNLQCASPEYAQGEDVLDAVYAFHLCED). Residue N380 is glycosylated (N-linked (GlcNAc...) asparagine). Residues 382-401 (SDLGPPASSATTLADGGEGQ) form a disordered region. A helical transmembrane segment spans residues 428–448 (VVTGTMALIFSFLIVVLVLYV). The Cytoplasmic segment spans residues 449-522 (SWKCFPASLR…HQQPARECEV (74 aa)).

It belongs to the LRRTM family. Predominantly expressed in forebrain regions including thalamus and cerebral cortex.

The protein resides in the cell membrane. It is found in the postsynaptic cell membrane. Exhibits strong synaptogenic activity, restricted to excitatory presynaptic differentiation, acting at both pre- and postsynaptic level. In Homo sapiens (Human), this protein is Leucine-rich repeat transmembrane neuronal protein 1 (LRRTM1).